The following is a 253-amino-acid chain: Small ribosomal subunit protein uS5 (253 aa).

A disordered region spans residues 1 to 30 (MAESAPRGFGRGGRGGRGRGRGRRGAKRDE). The span at 14–26 (RGGRGRGRGRRGA) shows a compositional bias: basic residues. The S5 DRBM domain maps to 75-138 (LNDEVMKVVP…IMGKLSIMPI (64 aa)).

It belongs to the universal ribosomal protein uS5 family. Component of the small ribosomal subunit (SSU). Mature yeast ribosomes consist of a small (40S) and a large (60S) subunit. The 40S small subunit contains 1 molecule of ribosomal RNA (18S rRNA) and at least 33 different proteins. The large 60S subunit contains 3 rRNA molecules (25S, 5.8S and 5S rRNA) and at least 46 different proteins. Interacts with snoRNA U3. Interacts with MPP10. Component of the ribosomal small subunit (SSU) processome composed of at least 40 protein subunits and snoRNA U3.

It localises to the cytoplasm. In terms of biological role, component of the ribosome, a large ribonucleoprotein complex responsible for the synthesis of proteins in the cell. The small ribosomal subunit (SSU) binds messenger RNAs (mRNAs) and translates the encoded message by selecting cognate aminoacyl-transfer RNA (tRNA) molecules. The large subunit (LSU) contains the ribosomal catalytic site termed the peptidyl transferase center (PTC), which catalyzes the formation of peptide bonds, thereby polymerizing the amino acids delivered by tRNAs into a polypeptide chain. The nascent polypeptides leave the ribosome through a tunnel in the LSU and interact with protein factors that function in enzymatic processing, targeting, and the membrane insertion of nascent chains at the exit of the ribosomal tunnel. Plays a role in the assembly and function of the 40S ribosomal subunit. Mutations in this protein affects the control of translational fidelity. Involved in nucleolar processing of pre-18S ribosomal RNA and ribosome assembly. Functionally, component of the ribosome, a large ribonucleoprotein complex responsible for the synthesis of proteins in the cell. The small ribosomal subunit (SSU) binds messenger RNAs (mRNAs) and translates the encoded message by selecting cognate aminoacyl-transfer RNA (tRNA) molecules. The large subunit (LSU) contains the ribosomal catalytic site termed the peptidyl transferase center (PTC), which catalyzes the formation of peptide bonds, thereby polymerizing the amino acids delivered by tRNAs into a polypeptide chain. The nascent polypeptides leave the ribosome through a tunnel in the LSU and interact with protein factors that function in enzymatic processing, targeting, and the membrane insertion of nascent chains at the exit of the ribosomal tunnel. uS5 is important for the assembly and function of the 40S ribosomal subunit. Mutations in this protein affects the control of translational fidelity. Involved in nucleolar processing of pre-18S ribosomal RNA and ribosome assembly. In Schizosaccharomyces pombe (strain 972 / ATCC 24843) (Fission yeast), this protein is Small ribosomal subunit protein uS5 (rps2).